We begin with the raw amino-acid sequence, 207 residues long: Ribosomal RNA small subunit methyltransferase G (207 aa).

Residues Gly74, Leu79, 125 to 126 (VE), and Arg140 each bind S-adenosyl-L-methionine.

Belongs to the methyltransferase superfamily. RNA methyltransferase RsmG family.

The protein localises to the cytoplasm. It catalyses the reaction guanosine(527) in 16S rRNA + S-adenosyl-L-methionine = N(7)-methylguanosine(527) in 16S rRNA + S-adenosyl-L-homocysteine. Its function is as follows. Specifically methylates the N7 position of guanine in position 527 of 16S rRNA. This is Ribosomal RNA small subunit methyltransferase G from Shewanella loihica (strain ATCC BAA-1088 / PV-4).